An 863-amino-acid chain; its full sequence is Leucine--tRNA ligase (863 aa).

The 'HIGH' region signature appears at 42–52 (PYPSGKIHMGH). Residues 618-622 (KMSKS) carry the 'KMSKS' region motif. Lysine 621 contributes to the ATP binding site.

This sequence belongs to the class-I aminoacyl-tRNA synthetase family.

The protein localises to the cytoplasm. The enzyme catalyses tRNA(Leu) + L-leucine + ATP = L-leucyl-tRNA(Leu) + AMP + diphosphate. The protein is Leucine--tRNA ligase of Desulforapulum autotrophicum (strain ATCC 43914 / DSM 3382 / VKM B-1955 / HRM2) (Desulfobacterium autotrophicum).